Here is a 317-residue protein sequence, read N- to C-terminus: Ribosomal protein L11 methyltransferase (317 aa).

Residues threonine 158, glycine 179, aspartate 201, and asparagine 244 each coordinate S-adenosyl-L-methionine.

This sequence belongs to the methyltransferase superfamily. PrmA family.

It localises to the cytoplasm. The catalysed reaction is L-lysyl-[protein] + 3 S-adenosyl-L-methionine = N(6),N(6),N(6)-trimethyl-L-lysyl-[protein] + 3 S-adenosyl-L-homocysteine + 3 H(+). Functionally, methylates ribosomal protein L11. The protein is Ribosomal protein L11 methyltransferase of Streptococcus pyogenes serotype M4 (strain MGAS10750).